The chain runs to 364 residues: Ribosomal RNA large subunit methyltransferase M (364 aa).

Residues Ser-198, 231–234 (APGG), Asp-250, Asp-270, and Asp-286 each bind S-adenosyl-L-methionine. Lys-315 serves as the catalytic Proton acceptor.

This sequence belongs to the class I-like SAM-binding methyltransferase superfamily. RNA methyltransferase RlmE family. RlmM subfamily. As to quaternary structure, monomer.

Its subcellular location is the cytoplasm. It carries out the reaction cytidine(2498) in 23S rRNA + S-adenosyl-L-methionine = 2'-O-methylcytidine(2498) in 23S rRNA + S-adenosyl-L-homocysteine + H(+). Its function is as follows. Catalyzes the 2'-O-methylation at nucleotide C2498 in 23S rRNA. In Thauera aminoaromatica, this protein is Ribosomal RNA large subunit methyltransferase M.